The sequence spans 150 residues: Arginine repressor (150 aa).

The protein belongs to the ArgR family.

It localises to the cytoplasm. The protein operates within amino-acid biosynthesis; L-arginine biosynthesis [regulation]. Functionally, regulates arginine biosynthesis genes. The sequence is that of Arginine repressor from Desulforudis audaxviator (strain MP104C).